A 459-amino-acid chain; its full sequence is SLIT-ROBO Rho GTPase-activating protein 2C (459 aa).

The F-BAR domain occupies 22-325; the sequence is KEIRAQLTEQ…AVENLDATSD (304 aa). Over residues 181–202 the composition is skewed to basic and acidic residues; that stretch reads LKEAEKQEEKQIGKSVKQEDRQ. Residues 181–211 are disordered; that stretch reads LKEAEKQEEKQIGKSVKQEDRQTPCSPDSTA. The stretch at 363–401 forms a coiled coil; it reads QSELVQRCQQLQSRLSTLKIENEEVKKTMEATLQTIQDI.

Homodimer. Interacts (via F-BAR domain) with SRGAP2/SRGAP2A (via F-BAR domain); formation of the heterodimer inhibits SRGAP2/SRGAP2A function. Ubiquitously expressed with higher expression in cerebellum. Probably expressed in fetal and adult neurons (at protein level).

Human-specific protein that acts as a key modifier of cortical connectivity in the human brain. Acts by inhibiting the functions of ancestral paralog SRGAP2/SRGAP2A, a postsynaptic protein that regulates excitatory and inhibitory synapse maturation and density in cortical pyramidal neurons. SRGAP2C is unstable but is able to heterodimerize with SRGAP2/SRGAP2A, thereby reducing SRGAP2/SRGAP2A levels through proteasome-dependent degradation. Inhibition of SRGAP2/SRGAP2A by SRGAP2C leads to an increase in synaptic density and protracted synaptic maturation of both excitatory and inhibitory synapses. Modifies cortical circuit connectivity by increasing the number of local and long-range cortical inputs received by layer 2/3 pyramidal neurons. Also able to increase the probability of sensory-evoked responses by layer 2/3 pyramidal neurons. The sequence is that of SLIT-ROBO Rho GTPase-activating protein 2C from Homo sapiens (Human).